The following is a 278-amino-acid chain: Formamidopyrimidine-DNA glycosylase (278 aa).

Proline 2 (schiff-base intermediate with DNA) is an active-site residue. Glutamate 3 functions as the Proton donor in the catalytic mechanism. Lysine 59 (proton donor; for beta-elimination activity) is an active-site residue. DNA is bound by residues histidine 93, arginine 112, and arginine 153. An FPG-type zinc finger spans residues 238–272; the sequence is NVYDRAGEPCPRCQSTIERIVVAQRSTYFCPTCQI. Catalysis depends on arginine 262, which acts as the Proton donor; for delta-elimination activity.

This sequence belongs to the FPG family. Monomer. It depends on Zn(2+) as a cofactor.

The enzyme catalyses Hydrolysis of DNA containing ring-opened 7-methylguanine residues, releasing 2,6-diamino-4-hydroxy-5-(N-methyl)formamidopyrimidine.. It catalyses the reaction 2'-deoxyribonucleotide-(2'-deoxyribose 5'-phosphate)-2'-deoxyribonucleotide-DNA = a 3'-end 2'-deoxyribonucleotide-(2,3-dehydro-2,3-deoxyribose 5'-phosphate)-DNA + a 5'-end 5'-phospho-2'-deoxyribonucleoside-DNA + H(+). Functionally, involved in base excision repair of DNA damaged by oxidation or by mutagenic agents. Acts as a DNA glycosylase that recognizes and removes damaged bases. Has a preference for oxidized purines, such as 7,8-dihydro-8-oxoguanine (8-oxoG). Has AP (apurinic/apyrimidinic) lyase activity and introduces nicks in the DNA strand. Cleaves the DNA backbone by beta-delta elimination to generate a single-strand break at the site of the removed base with both 3'- and 5'-phosphates. The protein is Formamidopyrimidine-DNA glycosylase of Chloroflexus aurantiacus (strain ATCC 29366 / DSM 635 / J-10-fl).